Reading from the N-terminus, the 515-residue chain is ATP synthase subunit alpha (515 aa).

Gly-171 to Thr-178 contacts ATP.

The protein belongs to the ATPase alpha/beta chains family. F-type ATPases have 2 components, CF(1) - the catalytic core - and CF(0) - the membrane proton channel. CF(1) has five subunits: alpha(3), beta(3), gamma(1), delta(1), epsilon(1). CF(0) has three main subunits: a(1), b(2) and c(9-12). The alpha and beta chains form an alternating ring which encloses part of the gamma chain. CF(1) is attached to CF(0) by a central stalk formed by the gamma and epsilon chains, while a peripheral stalk is formed by the delta and b chains.

The protein resides in the cell inner membrane. It catalyses the reaction ATP + H2O + 4 H(+)(in) = ADP + phosphate + 5 H(+)(out). In terms of biological role, produces ATP from ADP in the presence of a proton gradient across the membrane. The alpha chain is a regulatory subunit. The chain is ATP synthase subunit alpha from Xanthomonas oryzae pv. oryzae (strain MAFF 311018).